A 175-amino-acid polypeptide reads, in one-letter code: Shikimate kinase (175 aa).

14 to 19 contributes to the ATP binding site; sequence GAGKST. Serine 18 provides a ligand contact to Mg(2+). 3 residues coordinate substrate: aspartate 36, arginine 60, and glycine 82. Arginine 120 is an ATP binding site. Arginine 140 contacts substrate. Glutamine 157 is an ATP binding site.

The protein belongs to the shikimate kinase family. Monomer. It depends on Mg(2+) as a cofactor.

Its subcellular location is the cytoplasm. The catalysed reaction is shikimate + ATP = 3-phosphoshikimate + ADP + H(+). It participates in metabolic intermediate biosynthesis; chorismate biosynthesis; chorismate from D-erythrose 4-phosphate and phosphoenolpyruvate: step 5/7. Catalyzes the specific phosphorylation of the 3-hydroxyl group of shikimic acid using ATP as a cosubstrate. The protein is Shikimate kinase of Histophilus somni (strain 2336) (Haemophilus somnus).